The following is a 686-amino-acid chain: Methionine--tRNA ligase (686 aa).

Positions 15–25 match the 'HIGH' region motif; the sequence is PYANGPIHLGH. Residues Cys-146, Cys-149, Cys-159, and Cys-162 each contribute to the Zn(2+) site. Residues 332 to 336 carry the 'KMSKS' region motif; sequence KMSKS. Lys-335 is a binding site for ATP. The tRNA-binding domain maps to 585 to 686; that stretch reads TFAKTDLRVA…DGAKPGQRIM (102 aa).

The protein belongs to the class-I aminoacyl-tRNA synthetase family. MetG type 1 subfamily. As to quaternary structure, homodimer. Zn(2+) is required as a cofactor.

The protein localises to the cytoplasm. It catalyses the reaction tRNA(Met) + L-methionine + ATP = L-methionyl-tRNA(Met) + AMP + diphosphate. Is required not only for elongation of protein synthesis but also for the initiation of all mRNA translation through initiator tRNA(fMet) aminoacylation. This Psychromonas ingrahamii (strain DSM 17664 / CCUG 51855 / 37) protein is Methionine--tRNA ligase.